Reading from the N-terminus, the 206-residue chain is Orotate phosphoribosyltransferase (206 aa).

Residues Arg-97, Lys-98, Lys-101, and 125–133 (NDVIASGRS) contribute to the 5-phospho-alpha-D-ribose 1-diphosphate site. Arg-157 lines the orotate pocket.

This sequence belongs to the purine/pyrimidine phosphoribosyltransferase family. PyrE subfamily. Homodimer. Mg(2+) serves as cofactor.

The enzyme catalyses orotidine 5'-phosphate + diphosphate = orotate + 5-phospho-alpha-D-ribose 1-diphosphate. It participates in pyrimidine metabolism; UMP biosynthesis via de novo pathway; UMP from orotate: step 1/2. Its function is as follows. Catalyzes the transfer of a ribosyl phosphate group from 5-phosphoribose 1-diphosphate to orotate, leading to the formation of orotidine monophosphate (OMP). The polypeptide is Orotate phosphoribosyltransferase (Chlamydia caviae (strain ATCC VR-813 / DSM 19441 / 03DC25 / GPIC) (Chlamydophila caviae)).